A 162-amino-acid chain; its full sequence is Ribosomal RNA large subunit methyltransferase H (162 aa).

S-adenosyl-L-methionine is bound at residue Gly108.

This sequence belongs to the RNA methyltransferase RlmH family. As to quaternary structure, homodimer.

It is found in the cytoplasm. It catalyses the reaction pseudouridine(1915) in 23S rRNA + S-adenosyl-L-methionine = N(3)-methylpseudouridine(1915) in 23S rRNA + S-adenosyl-L-homocysteine + H(+). Its function is as follows. Specifically methylates the pseudouridine at position 1915 (m3Psi1915) in 23S rRNA. The sequence is that of Ribosomal RNA large subunit methyltransferase H from Methylobacterium sp. (strain 4-46).